We begin with the raw amino-acid sequence, 383 residues long: Protein KES1 (383 aa).

Basic and acidic residues predominate over residues 317-339 (FETASKDKARIENAQRQKRKDEA). The segment at 317-346 (FETASKDKARIENAQRQKRKDEAAAGTPHQ) is disordered.

The protein belongs to the OSBP family.

In terms of biological role, lipid transporter involved in lipid countertransport between the Golgi complex and membranes of the endoplasmic reticulum: specifically exchanges sterol with phosphatidylinositol 4-phosphate (PI4P), delivering sterol to the Golgi in exchange for PI4P, which is degraded by the SAC1 phosphatase in the endoplasmic reticulum. The polypeptide is Protein KES1 (KES1) (Mycosarcoma maydis (Corn smut fungus)).